Here is a 187-residue protein sequence, read N- to C-terminus: Troponin I, slow skeletal muscle (187 aa).

The residue at position 2 (P2) is an N-acetylproline. An involved in binding TNC region spans residues 2-48 (PEVERKSKITASRKLMLKSLMLAKAKECWEQEHEEREAEKVRYLSER). Residue S58 is modified to Phosphoserine. The tract at residues 97–118 (LKLKVLDLRGKFKRPPLRRVRV) is involved in binding TNC and actin.

Belongs to the troponin I family. Binds to actin and tropomyosin.

In terms of biological role, troponin I is the inhibitory subunit of troponin, the thin filament regulatory complex which confers calcium-sensitivity to striated muscle actomyosin ATPase activity. The sequence is that of Troponin I, slow skeletal muscle (Tnni1) from Rattus norvegicus (Rat).